Consider the following 443-residue polypeptide: ATP-dependent protease ATPase subunit HslU (443 aa).

Residues Ile-18, 60–65 (GVGKTE), Asp-256, Glu-321, and Arg-393 contribute to the ATP site.

It belongs to the ClpX chaperone family. HslU subfamily. In terms of assembly, a double ring-shaped homohexamer of HslV is capped on each side by a ring-shaped HslU homohexamer. The assembly of the HslU/HslV complex is dependent on binding of ATP.

Its subcellular location is the cytoplasm. Its function is as follows. ATPase subunit of a proteasome-like degradation complex; this subunit has chaperone activity. The binding of ATP and its subsequent hydrolysis by HslU are essential for unfolding of protein substrates subsequently hydrolyzed by HslV. HslU recognizes the N-terminal part of its protein substrates and unfolds these before they are guided to HslV for hydrolysis. The sequence is that of ATP-dependent protease ATPase subunit HslU from Pectobacterium atrosepticum (strain SCRI 1043 / ATCC BAA-672) (Erwinia carotovora subsp. atroseptica).